The primary structure comprises 604 residues: Aspartate--tRNA(Asp/Asn) ligase (604 aa).

L-aspartate is bound at residue Glu-174. An aspartate region spans residues 198-201; it reads QLYK. Arg-220 contacts L-aspartate. Residues 220-222 and Gln-229 contribute to the ATP site; that span reads RDE. Residue His-460 coordinates L-aspartate. Glu-494 lines the ATP pocket. Arg-501 serves as a coordination point for L-aspartate. Residue 546–549 participates in ATP binding; it reads GLDR.

The protein belongs to the class-II aminoacyl-tRNA synthetase family. Type 1 subfamily. As to quaternary structure, homodimer.

Its subcellular location is the cytoplasm. It catalyses the reaction tRNA(Asx) + L-aspartate + ATP = L-aspartyl-tRNA(Asx) + AMP + diphosphate. Aspartyl-tRNA synthetase with relaxed tRNA specificity since it is able to aspartylate not only its cognate tRNA(Asp) but also tRNA(Asn). Reaction proceeds in two steps: L-aspartate is first activated by ATP to form Asp-AMP and then transferred to the acceptor end of tRNA(Asp/Asn). In Paracidovorax citrulli (strain AAC00-1) (Acidovorax citrulli), this protein is Aspartate--tRNA(Asp/Asn) ligase.